A 218-amino-acid polypeptide reads, in one-letter code: Peptide methionine sulfoxide reductase MsrA (218 aa).

Cysteine 57 is a catalytic residue.

This sequence belongs to the MsrA Met sulfoxide reductase family.

The catalysed reaction is L-methionyl-[protein] + [thioredoxin]-disulfide + H2O = L-methionyl-(S)-S-oxide-[protein] + [thioredoxin]-dithiol. It carries out the reaction [thioredoxin]-disulfide + L-methionine + H2O = L-methionine (S)-S-oxide + [thioredoxin]-dithiol. Functionally, has an important function as a repair enzyme for proteins that have been inactivated by oxidation. Catalyzes the reversible oxidation-reduction of methionine sulfoxide in proteins to methionine. The sequence is that of Peptide methionine sulfoxide reductase MsrA from Brucella abortus (strain S19).